The sequence spans 432 residues: 3-phosphoshikimate 1-carboxyvinyltransferase (432 aa).

3-phosphoshikimate-binding residues include Lys23, Ser24, and Arg28. Residue Lys23 participates in phosphoenolpyruvate binding. Phosphoenolpyruvate is bound by residues Gly95 and Arg123. 3-phosphoshikimate is bound by residues Ser167, Gln169, Asp317, and Lys344. Phosphoenolpyruvate is bound at residue Gln169. The active-site Proton acceptor is Asp317. Positions 348 and 390 each coordinate phosphoenolpyruvate.

It belongs to the EPSP synthase family. Monomer.

The protein resides in the cytoplasm. The catalysed reaction is 3-phosphoshikimate + phosphoenolpyruvate = 5-O-(1-carboxyvinyl)-3-phosphoshikimate + phosphate. It participates in metabolic intermediate biosynthesis; chorismate biosynthesis; chorismate from D-erythrose 4-phosphate and phosphoenolpyruvate: step 6/7. In terms of biological role, catalyzes the transfer of the enolpyruvyl moiety of phosphoenolpyruvate (PEP) to the 5-hydroxyl of shikimate-3-phosphate (S3P) to produce enolpyruvyl shikimate-3-phosphate and inorganic phosphate. In Staphylococcus aureus (strain MRSA252), this protein is 3-phosphoshikimate 1-carboxyvinyltransferase.